Consider the following 393-residue polypeptide: Chorismate synthase (393 aa).

NADP(+) contacts are provided by Arg40 and Arg46. Residues 129 to 131, 250 to 251, Gly301, 316 to 320, and Arg342 contribute to the FMN site; these read RAS, QA, and KPIST.

It belongs to the chorismate synthase family. In terms of assembly, homotetramer. Requires FMNH2 as cofactor.

The enzyme catalyses 5-O-(1-carboxyvinyl)-3-phosphoshikimate = chorismate + phosphate. It functions in the pathway metabolic intermediate biosynthesis; chorismate biosynthesis; chorismate from D-erythrose 4-phosphate and phosphoenolpyruvate: step 7/7. Functionally, catalyzes the anti-1,4-elimination of the C-3 phosphate and the C-6 proR hydrogen from 5-enolpyruvylshikimate-3-phosphate (EPSP) to yield chorismate, which is the branch point compound that serves as the starting substrate for the three terminal pathways of aromatic amino acid biosynthesis. This reaction introduces a second double bond into the aromatic ring system. In Acidobacterium capsulatum (strain ATCC 51196 / DSM 11244 / BCRC 80197 / JCM 7670 / NBRC 15755 / NCIMB 13165 / 161), this protein is Chorismate synthase.